A 436-amino-acid polypeptide reads, in one-letter code: 3-oxo-tetronate kinase (436 aa).

ATP is bound by residues S272, 372 to 375, and G415; that span reads GGET.

This sequence belongs to the four-carbon acid sugar kinase family.

The enzyme catalyses 3-dehydro-L-erythronate + ATP = 3-dehydro-4-O-phospho-L-erythronate + ADP + H(+). It catalyses the reaction 3-dehydro-D-erythronate + ATP = 3-dehydro-4-O-phospho-D-erythronate + ADP + H(+). In terms of biological role, catalyzes the ATP-dependent phosphorylation of 3-oxo-tetronate to 3-oxo-tetronate 4-phosphate. This Brucella melitensis biotype 1 (strain ATCC 23456 / CCUG 17765 / NCTC 10094 / 16M) protein is 3-oxo-tetronate kinase.